Consider the following 83-residue polypeptide: Small ribosomal subunit protein bS16 (83 aa).

This sequence belongs to the bacterial ribosomal protein bS16 family.

The chain is Small ribosomal subunit protein bS16 from Shewanella baltica (strain OS223).